We begin with the raw amino-acid sequence, 549 residues long: Neutral amino acid transporter 9 (549 aa).

A disordered region spans residues 1–27 (MDEDSKPLLGSVPTGDYYTDSLDPKQR). The Cytoplasmic segment spans residues 1 to 107 (MDEDSKPLLG…GGDSPIKNPS (107 aa)). The helical transmembrane segment at 108–128 (IVTIFAIWNTMMGTSILSIPW) threads the bilayer. The important for arginine binding and amino acid transport stretch occupies residues 117-122 (TMMGTS). Ser122 is an arginine binding site. The Lumenal portion of the chain corresponds to 129–134 (GIKQAG). A helical transmembrane segment spans residues 135-155 (FTLGIIIIVLMGLLTLYCCYR). Residues 156–186 (VLKSTKSIPYVDTSDWEFPDVCKYYFGGFGK) lie on the Cytoplasmic side of the membrane. A helical membrane pass occupies residues 187–213 (WSSLVFSLVSLIGAMVVYWVLMSNFLF). At 214–271 (NTGKFIFNYVHNVNTSDAFGTNGTERVICPYPDVDPHGNSSTSLYSGSDNSTGLEFDH) the chain is on the lumenal side. Asn227, Asn235, Asn252, and Asn263 each carry an N-linked (GlcNAc...) asparagine glycan. Cys242 and Cys412 form a disulfide bridge. A helical membrane pass occupies residues 272–288 (WWSKTNTIPFYLILLLL). At 289-297 (PLLNFRSAS) the chain is on the cytoplasmic side. The helical transmembrane segment at 298 to 322 (FFARFTFLGTISVIYLIFLVTYKAI) threads the bilayer. At 323 to 344 (QLGFHLEFHWFDSSMFFVPEFR) the chain is on the lumenal side. A helical membrane pass occupies residues 345-365 (TLFPQLSGVLTLAFFIHNCII). Residues 366-382 (TLMKNNKHQENNVRDLS) lie on the Cytoplasmic side of the membrane. Residues 383–403 (LAYLLVGLTYLYVGVLIFAAF) traverse the membrane as a helical segment. Over 404–425 (PSPPLSKECIEPNFLDNFPSSD) the chain is Lumenal. Residues 426 to 446 (ILVFVARTFLLFQMTTVYPLL) form a helical membrane-spanning segment. The CARC motif motif lies at 432 to 442 (RTFLLFQMTTV). Residues 445–451 (LLGYLVR) carry the CRAC motif motif. Residues 447 to 467 (GYLVRVQLMGQIFGNHYPGFL) lie on the Cytoplasmic side of the membrane. A helical membrane pass occupies residues 468–488 (HVFVLNVFVVGAGVLMARFYP). The Lumenal segment spans residues 489 to 495 (NIGSIIR). A helical membrane pass occupies residues 496–516 (YSGALCGLALVFVLPSLIHMV). The Cytoplasmic segment spans residues 517-528 (SLKRRGELRWTS). A helical transmembrane segment spans residues 529-549 (TLFHGFLILLGVANLLGQFFM).

This sequence belongs to the amino acid/polyamine transporter 2 family. SLC38A9 subfamily. In terms of assembly, associated component of the Ragulator complex. Associated component of the Rag GTPases heterodimers (RRAGA and RRAGC). Post-translationally, glycosylated.

Its subcellular location is the lysosome membrane. It localises to the late endosome membrane. The catalysed reaction is L-leucine(in) = L-leucine(out). It carries out the reaction L-tyrosine(in) = L-tyrosine(out). It catalyses the reaction L-glutamine(out) = L-glutamine(in). The enzyme catalyses L-asparagine(out) = L-asparagine(in). Amino acid transport activity is increased by sodium. Transport of L-glutamine, leucine and tyrosine is increased by arginine binding. Lysosomal amino acid transporter involved in the activation of mTORC1 in response to amino acid levels. Probably acts as an amino acid sensor of the Rag GTPases and Ragulator complexes, 2 complexes involved in amino acid sensing and activation of mTORC1, a signaling complex promoting cell growth in response to growth factors, energy levels, and amino acids. Following activation by amino acids, the Ragulator and Rag GTPases function as a scaffold recruiting mTORC1 to lysosomes where it is in turn activated. SLC38A9 mediates transport of amino acids with low capacity and specificity with a slight preference for polar amino acids. Acts as an arginine sensor. Following activation by arginine binding, mediates transport of L-glutamine, leucine and tyrosine with high efficiency, and is required for the efficient utilization of these amino acids after lysosomal protein degradation. However, the transport mechanism is not well defined and the role of sodium is not clear. Guanine exchange factor (GEF) that, upon arginine binding, stimulates GDP release from RRAGA and therefore activates the Rag GTPase heterodimer and the mTORC1 pathway in response to nutrient sufficiency. This chain is Neutral amino acid transporter 9, found in Danio rerio (Zebrafish).